A 291-amino-acid chain; its full sequence is Ribosomal RNA small subunit methyltransferase A (291 aa).

Positions 21, 23, 48, 70, 95, and 115 each coordinate S-adenosyl-L-methionine.

It belongs to the class I-like SAM-binding methyltransferase superfamily. rRNA adenine N(6)-methyltransferase family. RsmA subfamily.

Its subcellular location is the cytoplasm. It catalyses the reaction adenosine(1518)/adenosine(1519) in 16S rRNA + 4 S-adenosyl-L-methionine = N(6)-dimethyladenosine(1518)/N(6)-dimethyladenosine(1519) in 16S rRNA + 4 S-adenosyl-L-homocysteine + 4 H(+). Specifically dimethylates two adjacent adenosines (A1518 and A1519) in the loop of a conserved hairpin near the 3'-end of 16S rRNA in the 30S particle. May play a critical role in biogenesis of 30S subunits. This is Ribosomal RNA small subunit methyltransferase A from Prochlorococcus marinus (strain NATL1A).